A 150-amino-acid chain; its full sequence is Protein NrdI (150 aa).

This sequence belongs to the NrdI family.

Its function is as follows. Probably involved in ribonucleotide reductase function. The sequence is that of Protein NrdI from Mycobacterium avium (strain 104).